We begin with the raw amino-acid sequence, 309 residues long: Homoserine O-succinyltransferase (309 aa).

Catalysis depends on cysteine 142, which acts as the Acyl-thioester intermediate. Residues lysine 163 and serine 192 each coordinate substrate. Histidine 235 serves as the catalytic Proton acceptor. Glutamate 237 is an active-site residue. Arginine 249 serves as a coordination point for substrate.

This sequence belongs to the MetA family.

It is found in the cytoplasm. It carries out the reaction L-homoserine + succinyl-CoA = O-succinyl-L-homoserine + CoA. It participates in amino-acid biosynthesis; L-methionine biosynthesis via de novo pathway; O-succinyl-L-homoserine from L-homoserine: step 1/1. In terms of biological role, transfers a succinyl group from succinyl-CoA to L-homoserine, forming succinyl-L-homoserine. This Photorhabdus laumondii subsp. laumondii (strain DSM 15139 / CIP 105565 / TT01) (Photorhabdus luminescens subsp. laumondii) protein is Homoserine O-succinyltransferase.